A 57-amino-acid polypeptide reads, in one-letter code: THCLTTAAGAPVARFSTVAGERGAADAERDIRRLFSYGDAARRLGVNHQHIPVNAPR.

Tyrosine 37 is a heme binding site.

Homodimer. It depends on heme as a cofactor.

It catalyses the reaction 2 H2O2 = O2 + 2 H2O. Decomposes hydrogen peroxide into water and oxygen; serves to protect cells from the toxic effects of hydrogen peroxide. The chain is Catalase-1 from Comamonas terrigena.